Reading from the N-terminus, the 542-residue chain is Prolyl 3-hydroxylase OGFOD1 (542 aa).

In terms of domain architecture, Fe2OG dioxygenase spans 134-239 (DLESTIDMSC…RLSISGWFHG (106 aa)). The Fe cation site is built by His155 and Asp157. Residue Tyr169 participates in 2-oxoglutarate binding. His218 is a Fe cation binding site. Arg230 is a binding site for 2-oxoglutarate. Residues 373 to 435 (EDEMNDKKEA…TKKESSVPTC (63 aa)) form a disordered region. A compositionally biased stretch (polar residues) spans 400-416 (ENNQTAISNNSQQSNEQ).

It belongs to the TPA1 family. In terms of assembly, monomer. Requires Fe(2+) as cofactor. The cofactor is L-ascorbate.

It localises to the cytoplasm. The protein localises to the nucleus. It catalyses the reaction [ribosomal protein uS12]-L-proline + 2-oxoglutarate + O2 = [ribosomal protein uS12]-(3S)-3-hydroxy-L-proline + succinate + CO2. Its function is as follows. Prolyl 3-hydroxylase that catalyzes 3-hydroxylation of 'Pro-62' of small ribosomal subunit uS12 (RPS23), thereby regulating protein translation termination efficiency. Involved in stress granule formation. This is Prolyl 3-hydroxylase OGFOD1 (OGFOD1) from Pongo abelii (Sumatran orangutan).